A 236-amino-acid chain; its full sequence is uncharacterized protein (236 aa).

The protein belongs to the HyuE racemase family.

The protein resides in the cytoplasm. This is an uncharacterized protein from Schizosaccharomyces pombe (strain 972 / ATCC 24843) (Fission yeast).